The primary structure comprises 72 residues: ATP synthase subunit c (72 aa).

2 consecutive transmembrane segments (helical) span residues 1 to 21 (MSLG…GAGI) and 49 to 69 (FIGV…AFIV).

The protein belongs to the ATPase C chain family. As to quaternary structure, F-type ATPases have 2 components, F(1) - the catalytic core - and F(0) - the membrane proton channel. F(1) has five subunits: alpha(3), beta(3), gamma(1), delta(1), epsilon(1). F(0) has three main subunits: a(1), b(2) and c(10-14). The alpha and beta chains form an alternating ring which encloses part of the gamma chain. F(1) is attached to F(0) by a central stalk formed by the gamma and epsilon chains, while a peripheral stalk is formed by the delta and b chains.

The protein localises to the cell membrane. Functionally, f(1)F(0) ATP synthase produces ATP from ADP in the presence of a proton or sodium gradient. F-type ATPases consist of two structural domains, F(1) containing the extramembraneous catalytic core and F(0) containing the membrane proton channel, linked together by a central stalk and a peripheral stalk. During catalysis, ATP synthesis in the catalytic domain of F(1) is coupled via a rotary mechanism of the central stalk subunits to proton translocation. In terms of biological role, key component of the F(0) channel; it plays a direct role in translocation across the membrane. A homomeric c-ring of between 10-14 subunits forms the central stalk rotor element with the F(1) delta and epsilon subunits. This chain is ATP synthase subunit c, found in Bacillus cytotoxicus (strain DSM 22905 / CIP 110041 / 391-98 / NVH 391-98).